A 265-amino-acid chain; its full sequence is Glutamate racemase (265 aa).

Substrate is bound by residues 9-10 (DS) and 41-42 (YG). Cys72 serves as the catalytic Proton donor/acceptor. 73-74 (NT) provides a ligand contact to substrate. Cys183 serves as the catalytic Proton donor/acceptor. Substrate is bound at residue 184 to 185 (TH).

This sequence belongs to the aspartate/glutamate racemases family.

The catalysed reaction is L-glutamate = D-glutamate. It participates in cell wall biogenesis; peptidoglycan biosynthesis. Its function is as follows. Provides the (R)-glutamate required for cell wall biosynthesis. The protein is Glutamate racemase of Lysinibacillus sphaericus (strain C3-41).